The chain runs to 277 residues: Uracil phosphoribosyltransferase homolog (277 aa).

The segment at 1 to 69 is disordered; that stretch reads MEAMPCHNQR…AAAPSPAAED (69 aa). Over residues 37–69 the composition is skewed to low complexity; sequence AEPSEGSSSGSPSPDSSSGSNGAAAAPSPAAED. Residues Arg-101, Arg-110, and 144-147 each bind GTP; that span reads EKGN. Position 154 (Arg-154) interacts with 5-phospho-alpha-D-ribose 1-diphosphate. GTP-binding residues include Arg-171 and Arg-200. Residue 206–214 coordinates 5-phospho-alpha-D-ribose 1-diphosphate; that stretch reads YPILSTGNT. 267-269 contributes to the uracil binding site; it reads THF.

The protein belongs to the UPRTase family.

The protein localises to the cytoplasm. The protein resides in the nucleus. In Gallus gallus (Chicken), this protein is Uracil phosphoribosyltransferase homolog (UPRT).